Here is a 274-residue protein sequence, read N- to C-terminus: DegV domain-containing protein Cgl2349/cg2579 (274 aa).

Residues 3–259 (VRVIVDSSAC…PGAVSVSAVF (257 aa)) enclose the DegV domain. Residues T39 and S73 each contribute to the hexadecanoate site.

As to quaternary structure, monomer.

Its function is as follows. Binds long-chain fatty acids, such as palmitate, and may play a role in lipid transport or fatty acid metabolism. The polypeptide is DegV domain-containing protein Cgl2349/cg2579 (Corynebacterium glutamicum (strain ATCC 13032 / DSM 20300 / JCM 1318 / BCRC 11384 / CCUG 27702 / LMG 3730 / NBRC 12168 / NCIMB 10025 / NRRL B-2784 / 534)).